The primary structure comprises 371 residues: Palmitoyl-monogalactosyldiacylglycerol delta-7 desaturase, chloroplastic (371 aa).

The transit peptide at 1-67 directs the protein to the chloroplast; it reads MASLLTKPKP…KGLKRDVTTA (67 aa). Transmembrane regions (helical) follow at residues 103–123 and 127–147; these read FGAV…PFQF and AVSV…TLSF. The Histidine box-1 signature appears at 148 to 153; that stretch reads HRNLSH. A Histidine box-2 motif is present at residues 185-189; it reads HRYHH. The helical transmembrane segment at 251 to 271 threads the bilayer; it reads ALAVALYAMGGFPFIVWGMGV. Residues 317–321 carry the Histidine box-3 motif; it reads HNNHH.

It belongs to the fatty acid desaturase type 1 family. Requires Fe(2+) as cofactor. As to expression, highly expressed in young leaves. Low expression in roots.

The protein resides in the plastid. Its subcellular location is the chloroplast membrane. It catalyses the reaction a 1-acyl-2-hexadecanoyl-glycerolipid + 2 reduced [2Fe-2S]-[ferredoxin] + O2 + 2 H(+) = a 1-acyl-2-[(7Z)-hexadecenoyl]-glycerolipid + 2 oxidized [2Fe-2S]-[ferredoxin] + 2 H2O. It participates in lipid metabolism; oxylipin biosynthesis. It functions in the pathway lipid metabolism; polyunsaturated fatty acid biosynthesis. Its function is as follows. Fatty acid desaturase involved in the first desaturation step leading to the formation of hexadeca 7,10,13-trienoic acid (16:3(7Z,10Z,13Z)), the major functional components of thylakoid membranes. Required for chloroplast biogenesis at low temperature. Also indirectly involved in the production of the oxylipin dinor-oxo-phyto-dienoic acid implicated in wound signaling. In Arabidopsis thaliana (Mouse-ear cress), this protein is Palmitoyl-monogalactosyldiacylglycerol delta-7 desaturase, chloroplastic.